Consider the following 221-residue polypeptide: Pyridoxal phosphate homeostasis protein (221 aa).

The residue at position 26 (Lys-26) is an N6-(pyridoxal phosphate)lysine.

The protein belongs to the pyridoxal phosphate-binding protein YggS/PROSC family.

Its function is as follows. Pyridoxal 5'-phosphate (PLP)-binding protein, which is involved in PLP homeostasis. This is Pyridoxal phosphate homeostasis protein from Corynebacterium glutamicum (strain ATCC 13032 / DSM 20300 / JCM 1318 / BCRC 11384 / CCUG 27702 / LMG 3730 / NBRC 12168 / NCIMB 10025 / NRRL B-2784 / 534).